Consider the following 83-residue polypeptide: Putative potassium channel toxin Ts20 (83 aa).

The N-terminal stretch at 1–18 (MKLDIVLIMFVTFSTTLA) is a signal peptide.

Post-translationally, contains 3 disulfide bonds. In terms of tissue distribution, expressed by the venom gland.

The protein localises to the secreted. Functionally, reversibly inhibits potassium channels. In Tityus serrulatus (Brazilian scorpion), this protein is Putative potassium channel toxin Ts20.